The chain runs to 149 residues: ER export of PMA1 protein 1 (149 aa).

The Lumenal segment spans residues 1 to 6; the sequence is MNLYGY. Residues 7 to 27 form a helical; Signal-anchor for type II membrane protein membrane-spanning segment; sequence FLLLIIVIAFIALLPLFSGIG. Topologically, residues 28–149 are cytoplasmic; sequence TFKLTKPKSS…KKNEAYEGFV (122 aa).

In terms of assembly, interacts with PMA1 and PSG1.

The protein localises to the endoplasmic reticulum membrane. The protein resides in the cytoplasmic vesicle. It is found in the COPI-coated vesicle membrane. Its subcellular location is the COPII-coated vesicle membrane. It localises to the golgi apparatus membrane. In terms of biological role, specific cargo receptor protein for the plasma membrane ATPase PMA1 that acts with PSG1 to promote the transport and maturation of PMA1. EXP1 and PSG1 probably act sequentially to promote PMA1 sorting between the ER and the Golgi, with EXP1 promoting PMA1 export from the ER to the Golgi while PSG1 has a role in PMA1 maturation or quality control in the Golgi. The protein is ER export of PMA1 protein 1 of Saccharomyces cerevisiae (strain ATCC 204508 / S288c) (Baker's yeast).